The chain runs to 377 residues: Cytochrome b (377 aa).

4 helical membrane passes run 34–54, 78–100, 113–133, and 179–199; these read FGFLLGMCLSIQIFTGLFLSM, WLLRVLHANGGSMFFICLYIHIA, TWMTGVVLLILVMATAFLGYV, and FFTLHFILPFVVLAMVAIHLL. Positions 84 and 98 each coordinate heme b. Heme b-binding residues include His183 and His197. Position 202 (His202) interacts with a ubiquinone. 4 helical membrane passes run 225–245, 288–308, 323–343, and 352–372; these read FTIKDLFGVVVMVWLLMILVL, KLGGVVALLASVVILIILPLY, MLFWGFISIFILLTWIGAQAI, and QILTSLYFFYFILSPLLSVLW.

It belongs to the cytochrome b family. In terms of assembly, the main subunits of complex b-c1 are: cytochrome b, cytochrome c1 and the Rieske protein. Requires heme b as cofactor.

It localises to the mitochondrion inner membrane. In terms of biological role, component of the ubiquinol-cytochrome c reductase complex (complex III or cytochrome b-c1 complex) that is part of the mitochondrial respiratory chain. The b-c1 complex mediates electron transfer from ubiquinol to cytochrome c. Contributes to the generation of a proton gradient across the mitochondrial membrane that is then used for ATP synthesis. The chain is Cytochrome b (mt:Cyt-b) from Priapulus caudatus (Priapulid worm).